Consider the following 81-residue polypeptide: RNA-binding protein Hfq (81 aa).

The Sm domain maps to 9-68 (DPYLNILRKERVPVSIFLVNGIKLQGQIESFDQFVILLKNTVSQMVYKHAISTVVPSRTI).

Belongs to the Hfq family. Homohexamer.

In terms of biological role, RNA chaperone that binds small regulatory RNA (sRNAs) and mRNAs to facilitate mRNA translational regulation in response to envelope stress, environmental stress and changes in metabolite concentrations. Also binds with high specificity to tRNAs. In Marinomonas sp. (strain MWYL1), this protein is RNA-binding protein Hfq.